The following is a 267-amino-acid chain: Diphthine--ammonia ligase (267 aa).

A Phosphotyrosine modification is found at Tyr97.

The protein belongs to the Diphthine--ammonia ligase family.

It catalyses the reaction diphthine-[translation elongation factor 2] + NH4(+) + ATP = diphthamide-[translation elongation factor 2] + AMP + diphosphate + H(+). Its pathway is protein modification; peptidyl-diphthamide biosynthesis. Functionally, amidase that catalyzes the last step of diphthamide biosynthesis using ammonium and ATP. Diphthamide biosynthesis consists in the conversion of an L-histidine residue in the translation elongation factor eEF-2 (EEF2) to diphthamide. This chain is Diphthine--ammonia ligase (DPH6), found in Bos taurus (Bovine).